The chain runs to 249 residues: Isoamyl acetate-hydrolyzing esterase 1 homolog (249 aa).

Serine 24 acts as the Nucleophile in catalysis. Residue lysine 63 is modified to N6-succinyllysine. The Proton donor role is filled by aspartate 197. The active-site Proton acceptor is histidine 200.

It belongs to the 'GDSL' lipolytic enzyme family. IAH1 subfamily.

Its function is as follows. Probable lipase. In Bos taurus (Bovine), this protein is Isoamyl acetate-hydrolyzing esterase 1 homolog (IAH1).